Consider the following 847-residue polypeptide: MQFGKSLLKHVYTRTFKSSLTCSIFAFTLLMIFFVLDWKRMNVYPRLDEIPGLNVLRAWDDLQEITKSPHPYNSHASDVVRNYILEELYKLKKQDEGNVEVIDDLSSTTTFIMPDTNIRSYFEGSNILVRFRGDNERLRPILLSSHFDSVSTGFGATDNGMGVASALELARYYAEHKPERDLIINFNNAEEDYLYGARAFTEHEWSKNVTAFLNLEGAGAGGKALLFRSTNNHVARSYFKSNRFAFASVLGIDAFKRGVIKSETDYVVYEKMNNGTAGLDLAFFRNRGIYHTERDDIQHTSIFSLNHMLVNAFISLRNLLDEKSQHFKGSSPLYFPVFGSYWQINLNLHLFLNVVFLIACPAILFMCLFRFPSLYAQLKKPCYLICFTLSSLFVLIFDYVVVQSLTKLNPYVIHSSPDAVLAFFFLTNLLGLVYSFRYVATHSRMSNEELSCIEIVLIWYVSMFWYISLLIATLTSIVRGLGSLYFVNFGFFCSFFCCILTLIRVRYFVDRMVTINRPANPEQMPLVQSTSGNAYGTSRYPQHRLKAVVSKSASVKLNDNLWSVLFFSCLVPLPLFTCYNLLSEVFIPAVHQSLIDGPYSNTCYKFAVILVFMAIINSSPFVFRALSKKSSAILLMLWVSLLFNILRAEPFNEKAPIKFRVFQHLNLDTSENLFHVQNIEPYTQKVLNDYPKIISDTSYQCVDRDCFYEAEEPTLGFDGPLQNAINITLHKSLNSSLAELRVDAFETKWCYFDFSVPVYVDSINGFEVQEEHQSLRLGVRNFGTPFVVKTVAKDEDSPTNVTVTCMWDEFDHDKIPSYTSLLNYIPAWSVLTKNSTGLLKMSKTHVM.

Residues 1-17 (MQFGKSLLKHVYTRTFK) are Cytoplasmic-facing. The helical transmembrane segment at 18-38 (SSLTCSIFAFTLLMIFFVLDW) threads the bilayer. Residues 39 to 348 (KRMNVYPRLD…GSYWQINLNL (310 aa)) lie on the Vacuolar side of the membrane. Residues His-146 and Asp-158 each coordinate Zn(2+). The Proton acceptor role is filled by Glu-190. Glu-191 contacts Zn(2+). A glycan (N-linked (GlcNAc...) asparagine) is linked at Asn-208. Glu-216 is a binding site for Zn(2+). N-linked (GlcNAc...) asparagine glycosylation occurs at Asn-274. His-291 provides a ligand contact to Zn(2+). Residues 349–369 (HLFLNVVFLIACPAILFMCLF) traverse the membrane as a helical segment. Residues 370–381 (RFPSLYAQLKKP) are Cytoplasmic-facing. A helical transmembrane segment spans residues 382–402 (CYLICFTLSSLFVLIFDYVVV). Topologically, residues 403 to 415 (QSLTKLNPYVIHS) are vacuolar. A helical membrane pass occupies residues 416-436 (SPDAVLAFFFLTNLLGLVYSF). Over 437-454 (RYVATHSRMSNEELSCIE) the chain is Cytoplasmic. The helical transmembrane segment at 455 to 475 (IVLIWYVSMFWYISLLIATLT) threads the bilayer. Over 476–482 (SIVRGLG) the chain is Vacuolar. A helical transmembrane segment spans residues 483 to 503 (SLYFVNFGFFCSFFCCILTLI). Over 504 to 560 (RVRYFVDRMVTINRPANPEQMPLVQSTSGNAYGTSRYPQHRLKAVVSKSASVKLNDN) the chain is Cytoplasmic. The helical transmembrane segment at 561 to 581 (LWSVLFFSCLVPLPLFTCYNL) threads the bilayer. Residues 582–605 (LSEVFIPAVHQSLIDGPYSNTCYK) lie on the Vacuolar side of the membrane. A helical transmembrane segment spans residues 606-626 (FAVILVFMAIINSSPFVFRAL). Residues 627-630 (SKKS) are Cytoplasmic-facing. Residues 631-651 (SAILLMLWVSLLFNILRAEPF) traverse the membrane as a helical segment. Over 652–847 (NEKAPIKFRV…LLKMSKTHVM (196 aa)) the chain is Vacuolar. N-linked (GlcNAc...) asparagine glycosylation is found at Asn-726, Asn-734, Asn-800, and Asn-834.

Belongs to the peptidase M28 family. Requires Zn(2+) as cofactor.

It is found in the vacuole membrane. May be involved in vacuolar sorting and osmoregulation. The sequence is that of Vacuolar membrane protease from Schizosaccharomyces japonicus (strain yFS275 / FY16936) (Fission yeast).